Here is a 140-residue protein sequence, read N- to C-terminus: Large ribosomal subunit protein uL15 (140 aa).

A disordered region spans residues 1-31 (MDTKKFRGSRTCGGGTHKNRRGAGNRGGRGK).

It belongs to the universal ribosomal protein uL15 family. Part of the 50S ribosomal subunit.

Binds to the 23S rRNA. This chain is Large ribosomal subunit protein uL15, found in Methanosarcina barkeri (strain Fusaro / DSM 804).